A 702-amino-acid polypeptide reads, in one-letter code: Arginine decarboxylase 1 (702 aa).

The residue at position 151 (Lys151) is an N6-(pyridoxal phosphate)lysine. Ile336–Tyr346 is a binding site for substrate. Over residues Ala668 to Ala686 the composition is skewed to low complexity. The disordered stretch occupies residues Ala668–Val702.

Belongs to the Orn/Lys/Arg decarboxylase class-II family. SpeA subfamily. Pyridoxal 5'-phosphate is required as a cofactor. Mg(2+) serves as cofactor. Expressed in roots, leaves and stems (at protein level).

The enzyme catalyses L-arginine + H(+) = agmatine + CO2. It functions in the pathway amine and polyamine biosynthesis; agmatine biosynthesis; agmatine from L-arginine: step 1/1. The sequence is that of Arginine decarboxylase 1 (ADC1) from Oryza sativa subsp. japonica (Rice).